The sequence spans 767 residues: Integrin beta-8 (767 aa).

A signal peptide spans 1-21 (MCGSALAFLTAALLSLHNCQR). Residues 22–681 (GPALVLGAAW…SECLSGPSYL (660 aa)) are Extracellular-facing. Residues 46-95 (RCGSANVVSCARCLQLGPECGWCVQEDFVSGGSGSERCDTVSSLISKGCP) enclose the PSI domain. Intrachain disulfides connect Cys-47–Cys-65, Cys-55–Cys-469, Cys-58–Cys-83, Cys-68–Cys-94, Cys-211–Cys-218, Cys-266–Cys-307, Cys-407–Cys-419, Cys-439–Cys-467, Cys-471–Cys-490, Cys-471–Cys-493, Cys-481–Cys-493, Cys-498–Cys-527, Cys-510–Cys-525, Cys-519–Cys-530, Cys-532–Cys-545, Cys-552–Cys-566, Cys-560–Cys-571, Cys-573–Cys-582, Cys-584–Cys-608, Cys-592–Cys-606, Cys-600–Cys-611, Cys-613–Cys-623, Cys-626–Cys-629, Cys-633–Cys-660, and Cys-639–Cys-656. The VWFA domain occupies 146–384 (PVDLYYLVDV…NLVVEAYKKI (239 aa)). Mg(2+) contacts are provided by Asp-154 and Ser-156. Asp-193 contacts Ca(2+). Residue Asn-233 is glycosylated (N-linked (GlcNAc...) asparagine). Ca(2+) is bound by residues Asn-249, Asp-251, Pro-253, and Glu-254. Residue Glu-254 coordinates Mg(2+). N-linked (GlcNAc...) asparagine glycosylation occurs at Asn-402. N-linked (GlcNAc...) asparagine glycosylation is found at Asn-421, Asn-431, and Asn-456. I-EGF domains are found at residues 471-494 (CENH…PQCD), 498-546 (CHFD…QYCE), 547-583 (KDDF…DRCQ), and 584-624 (CPSA…RLCE). The N-linked (GlcNAc...) asparagine glycan is linked to Asn-647. The helical transmembrane segment at 682-702 (RIFFIIFIVTFLIGLLKVLII) threads the bilayer. Residues 703–767 (RQVILQWNNN…NAQEAFRCNF (65 aa)) are Cytoplasmic-facing.

This sequence belongs to the integrin beta chain family. Heterodimer of an alpha and a beta subunit. Beta-8 (ITGB8) associates with alpha-V (ITGAV) to form ITGAV:ITGB8. ITGAV:ITGB8 interacts with TGFB1.

The protein resides in the cell membrane. Functionally, integrin alpha-V:beta-8 (ITGAV:ITGB8) is a receptor for fibronectin. It recognizes the sequence R-G-D in its ligands. Integrin alpha-V:beta-6 (ITGAV:ITGB6) mediates R-G-D-dependent release of transforming growth factor beta-1 (TGF-beta-1) from regulatory Latency-associated peptide (LAP), thereby playing a key role in TGF-beta-1 activation on the surface of activated regulatory T-cells (Tregs). Required during vasculogenesis. In Mus musculus (Mouse), this protein is Integrin beta-8.